Consider the following 256-residue polypeptide: Small ribosomal subunit protein eS1 (256 aa).

An N-acetylalanine; partial modification is found at Ala2.

This sequence belongs to the eukaryotic ribosomal protein eS1 family. As to quaternary structure, component of the small ribosomal subunit. Mature ribosomes consist of a small (40S) and a large (60S) subunit. The 40S subunit contains about 33 different proteins and 1 molecule of RNA (18S). The 60S subunit contains about 49 different proteins and 3 molecules of RNA (25S, 5.8S and 5S).

The protein localises to the cytoplasm. This Eremothecium gossypii (strain ATCC 10895 / CBS 109.51 / FGSC 9923 / NRRL Y-1056) (Yeast) protein is Small ribosomal subunit protein eS1.